A 279-amino-acid polypeptide reads, in one-letter code: Pantothenate synthetase (279 aa).

26–33 (MGNLHEGH) contacts ATP. Residue H33 is the Proton donor of the active site. Q57 is a (R)-pantoate binding site. Residue Q57 coordinates beta-alanine. 144–147 (GKKD) serves as a coordination point for ATP. Residue Q150 participates in (R)-pantoate binding. ATP is bound by residues V173 and 181–184 (LSSR).

It belongs to the pantothenate synthetase family. Homodimer.

The protein localises to the cytoplasm. It carries out the reaction (R)-pantoate + beta-alanine + ATP = (R)-pantothenate + AMP + diphosphate + H(+). It participates in cofactor biosynthesis; (R)-pantothenate biosynthesis; (R)-pantothenate from (R)-pantoate and beta-alanine: step 1/1. Catalyzes the condensation of pantoate with beta-alanine in an ATP-dependent reaction via a pantoyl-adenylate intermediate. This Burkholderia ambifaria (strain ATCC BAA-244 / DSM 16087 / CCUG 44356 / LMG 19182 / AMMD) (Burkholderia cepacia (strain AMMD)) protein is Pantothenate synthetase.